A 226-amino-acid polypeptide reads, in one-letter code: Ribonuclease 3 (226 aa).

One can recognise an RNase III domain in the interval 7-129; the sequence is LARLSRTLGY…IIGAVYLDAN (123 aa). E42 is a binding site for Mg(2+). Residue D46 is part of the active site. Residues D115 and E118 each coordinate Mg(2+). The active site involves E118. The DRBM domain maps to 156–226; it reads DPKTILQEYL…AAQILELINK (71 aa).

Belongs to the ribonuclease III family. Homodimer. It depends on Mg(2+) as a cofactor.

It localises to the cytoplasm. The enzyme catalyses Endonucleolytic cleavage to 5'-phosphomonoester.. In terms of biological role, digests double-stranded RNA. Involved in the processing of primary rRNA transcript to yield the immediate precursors to the large and small rRNAs (23S and 16S). Processes some mRNAs, and tRNAs when they are encoded in the rRNA operon. Processes pre-crRNA and tracrRNA of type II CRISPR loci if present in the organism. The chain is Ribonuclease 3 from Shewanella denitrificans (strain OS217 / ATCC BAA-1090 / DSM 15013).